A 58-amino-acid chain; its full sequence is Alpha-conotoxin AuIB (58 aa).

A signal peptide spans 1-16 (MFTVFLLVVLATTVVS). A propeptide spanning residues 17–39 (FTSDRASDGRKDAASGLIALTMK) is cleaved from the precursor. Disulfide bonds link cysteine 41-cysteine 47 and cysteine 42-cysteine 54. Cysteine 54 carries the post-translational modification Cysteine amide.

In terms of tissue distribution, expressed by the venom duct.

The protein localises to the secreted. Its function is as follows. Alpha-conotoxins act on postsynaptic membranes, they bind to the nicotinic acetylcholine receptors (nAChR) and thus inhibit them. This toxin blocks mammalian nAChR alpha-3-beta-4/CHRNA3-CHRNB4 subunits. Also exhibits inhibition of D.melanogaster alpha-7/CHRNA7 nAChRs. This is Alpha-conotoxin AuIB from Conus aulicus (Princely cone).